Reading from the N-terminus, the 191-residue chain is Holliday junction branch migration complex subunit RuvA (191 aa).

Positions 1–64 (MIGTLSGIIE…DNVPQLYGFT (64 aa)) are domain I. Residues 65 to 145 (DTEEQNCLKM…FNIMDKRGPS (81 aa)) are domain II. The interval 146–149 (VEDS) is flexible linker. Positions 149–191 (SDALSALLSLGYEKTRVLNALEKVGVSHNLSDTVRFALKELSK) are domain III.

It belongs to the RuvA family. As to quaternary structure, homotetramer. Forms an RuvA(8)-RuvB(12)-Holliday junction (HJ) complex. HJ DNA is sandwiched between 2 RuvA tetramers; dsDNA enters through RuvA and exits via RuvB. An RuvB hexamer assembles on each DNA strand where it exits the tetramer. Each RuvB hexamer is contacted by two RuvA subunits (via domain III) on 2 adjacent RuvB subunits; this complex drives branch migration. In the full resolvosome a probable DNA-RuvA(4)-RuvB(12)-RuvC(2) complex forms which resolves the HJ.

The protein localises to the cytoplasm. Its function is as follows. The RuvA-RuvB-RuvC complex processes Holliday junction (HJ) DNA during genetic recombination and DNA repair, while the RuvA-RuvB complex plays an important role in the rescue of blocked DNA replication forks via replication fork reversal (RFR). RuvA specifically binds to HJ cruciform DNA, conferring on it an open structure. The RuvB hexamer acts as an ATP-dependent pump, pulling dsDNA into and through the RuvAB complex. HJ branch migration allows RuvC to scan DNA until it finds its consensus sequence, where it cleaves and resolves the cruciform DNA. This Anaplasma phagocytophilum (strain HZ) protein is Holliday junction branch migration complex subunit RuvA.